The sequence spans 678 residues: DNA ligase (678 aa).

NAD(+)-binding positions include 35 to 39 (DSVYD), 84 to 85 (SL), and Glu116. Catalysis depends on Lys118, which acts as the N6-AMP-lysine intermediate. Residues Arg139, Glu178, Lys297, and Lys321 each contribute to the NAD(+) site. Zn(2+) contacts are provided by Cys415, Cys418, Cys433, and Cys438. A BRCT domain is found at 600–678 (DGNQIFAGKT…EAQLLEMLNE (79 aa)).

This sequence belongs to the NAD-dependent DNA ligase family. LigA subfamily. It depends on Mg(2+) as a cofactor. Mn(2+) serves as cofactor.

It catalyses the reaction NAD(+) + (deoxyribonucleotide)n-3'-hydroxyl + 5'-phospho-(deoxyribonucleotide)m = (deoxyribonucleotide)n+m + AMP + beta-nicotinamide D-nucleotide.. DNA ligase that catalyzes the formation of phosphodiester linkages between 5'-phosphoryl and 3'-hydroxyl groups in double-stranded DNA using NAD as a coenzyme and as the energy source for the reaction. It is essential for DNA replication and repair of damaged DNA. This is DNA ligase from Nostoc punctiforme (strain ATCC 29133 / PCC 73102).